The following is a 279-amino-acid chain: Cell death abnormality protein 2 (279 aa).

An SH2 domain is found at 14 to 115 (FYFPGMSREE…EASLLAAYKK (102 aa)). An SH3 1 domain is found at 116-176 (PIIEVVVGTF…PANYVQIQME (61 aa)). Residues 181–213 (RTSKGASQSSIGSSGGGAERFSSASTSSDNIEL) are disordered. Over residues 202–211 (SSASTSSDNI) the composition is skewed to polar residues. In terms of domain architecture, SH3 2 spans 214-277 (QPRLPAKAKV…PHTYLRFTAV (64 aa)).

The protein belongs to the CRK family. As to quaternary structure, interacts with ced-5 (via C-terminus which contains a candidate SH3-binding, proline-rich region). Forms a ternary complex with ced-5 and ced-12. Interacts (via SH2 domain) with src-1 (when activated and phosphorylated at 'Tyr-416').

Its function is as follows. Required for cell migration and engulfment of cell corpses but not for programmed cell death/apoptosis. Has a role in the migration of the 2 gonadal distal tip cells (DTCs). Plays a role in protecting dopaminergic neurons from oxidative stress-induced degeneration. The chain is Cell death abnormality protein 2 from Caenorhabditis elegans.